The sequence spans 111 residues: MAMPNLGDMMKQIQQAGEKMQEVQKQLERLVAHGEAGGGMVKATVSGKQKLLSLAIDPEIMDDYEMVQDLVVAAVNSALDASLKLAQDEIGKVTGGMMNPTELLKNLNLGQ.

It belongs to the YbaB/EbfC family. Homodimer.

The protein resides in the cytoplasm. It is found in the nucleoid. Functionally, binds to DNA and alters its conformation. May be involved in regulation of gene expression, nucleoid organization and DNA protection. The protein is Nucleoid-associated protein Cag_1190 of Chlorobium chlorochromatii (strain CaD3).